The chain runs to 219 residues: 3,4-dihydroxy-2-butanone 4-phosphate synthase (219 aa).

D-ribulose 5-phosphate-binding positions include 37–38 (RE), Asp-42, 150–154 (RRGHT), and Glu-174. Glu-38 is a Mg(2+) binding site. His-153 is a Mg(2+) binding site.

This sequence belongs to the DHBP synthase family. In terms of assembly, homodimer. Mg(2+) is required as a cofactor. Mn(2+) serves as cofactor.

It carries out the reaction D-ribulose 5-phosphate = (2S)-2-hydroxy-3-oxobutyl phosphate + formate + H(+). Its pathway is cofactor biosynthesis; riboflavin biosynthesis; 2-hydroxy-3-oxobutyl phosphate from D-ribulose 5-phosphate: step 1/1. Catalyzes the conversion of D-ribulose 5-phosphate to formate and 3,4-dihydroxy-2-butanone 4-phosphate. The protein is 3,4-dihydroxy-2-butanone 4-phosphate synthase of Edwardsiella ictaluri (strain 93-146).